A 180-amino-acid polypeptide reads, in one-letter code: Ribulose bisphosphate carboxylase small subunit, chloroplastic 3 (180 aa).

The transit peptide at 1–56 (MASMISSSAVTTVSRASTVQSAAVAPFGGLKSMTGFPVKKVNTDITSITSNGGRVK) directs the protein to the chloroplast.

This sequence belongs to the RuBisCO small chain family. As to quaternary structure, heterohexadecamer of 8 large and 8 small subunits.

Its subcellular location is the plastid. The protein localises to the chloroplast. RuBisCO catalyzes two reactions: the carboxylation of D-ribulose 1,5-bisphosphate, the primary event in carbon dioxide fixation, as well as the oxidative fragmentation of the pentose substrate. Both reactions occur simultaneously and in competition at the same active site. Although the small subunit is not catalytic it is essential for maximal activity. Binds to abscisic acid (ABA); only half of the possible binding sites are occupied in the crystal; and there are indications this is a low affinity site. This Pisum sativum (Garden pea) protein is Ribulose bisphosphate carboxylase small subunit, chloroplastic 3 (RBCS.3A).